We begin with the raw amino-acid sequence, 390 residues long: Succinate--CoA ligase [ADP-forming] subunit beta (390 aa).

One can recognise an ATP-grasp domain in the interval 9–244 (KEIFREYGVP…LSEEDPVEVE (236 aa)). ATP is bound by residues K46, 53–55 (GRG), E99, A102, and E107. Mg(2+)-binding residues include N199 and D213. Substrate is bound by residues N264 and 321-323 (GIV).

Belongs to the succinate/malate CoA ligase beta subunit family. In terms of assembly, heterotetramer of two alpha and two beta subunits. It depends on Mg(2+) as a cofactor.

It catalyses the reaction succinate + ATP + CoA = succinyl-CoA + ADP + phosphate. The catalysed reaction is GTP + succinate + CoA = succinyl-CoA + GDP + phosphate. It participates in carbohydrate metabolism; tricarboxylic acid cycle; succinate from succinyl-CoA (ligase route): step 1/1. Succinyl-CoA synthetase functions in the citric acid cycle (TCA), coupling the hydrolysis of succinyl-CoA to the synthesis of either ATP or GTP and thus represents the only step of substrate-level phosphorylation in the TCA. The beta subunit provides nucleotide specificity of the enzyme and binds the substrate succinate, while the binding sites for coenzyme A and phosphate are found in the alpha subunit. This chain is Succinate--CoA ligase [ADP-forming] subunit beta, found in Nitratiruptor sp. (strain SB155-2).